The sequence spans 265 residues: 3-methyl-2-oxobutanoate hydroxymethyltransferase (265 aa).

The Mg(2+) site is built by aspartate 43 and aspartate 82. Residues 43–44 (DS), aspartate 82, and lysine 111 contribute to the 3-methyl-2-oxobutanoate site. Glutamate 113 lines the Mg(2+) pocket. The active-site Proton acceptor is the glutamate 180.

It belongs to the PanB family. In terms of assembly, homodecamer; pentamer of dimers. Mg(2+) is required as a cofactor.

The protein localises to the cytoplasm. The catalysed reaction is 3-methyl-2-oxobutanoate + (6R)-5,10-methylene-5,6,7,8-tetrahydrofolate + H2O = 2-dehydropantoate + (6S)-5,6,7,8-tetrahydrofolate. It functions in the pathway cofactor biosynthesis; (R)-pantothenate biosynthesis; (R)-pantoate from 3-methyl-2-oxobutanoate: step 1/2. Catalyzes the reversible reaction in which hydroxymethyl group from 5,10-methylenetetrahydrofolate is transferred onto alpha-ketoisovalerate to form ketopantoate. In Francisella tularensis subsp. novicida (strain U112), this protein is 3-methyl-2-oxobutanoate hydroxymethyltransferase.